A 371-amino-acid chain; its full sequence is MSYITLTLPFNVGGSVAGDLFSTAWLFKTATHRMLSLAKQTPILPATDIGWKNTFRKAIYEVIPNRRYVDGVITLVRGIYESCRQLGVGFKEVELGDWLMFQQAEKEYPVRNITLKDDYSFYITTIGYNGEKDRIVVKPTIPKNYKVLLDKILEERQKHTARIVIKDYGVRKNRLWVHGEIQLTIPIDFYYKHMTRYRRNYGKLYGGVDVNVDRANLAVVDRYGRLRHVKTFWFEEASRKGCRSRRARSIIGMTVHDMLKYAYHHGVKTLFLENPDVLGKLKLLWIRNGKRLHRNYNWRVSVFRSRIIEMITMKTPLYAIRVEYVDPRRTTHSEEHDKIMKRYGLDRHSTSAYLIALRGIERYSSIQKVTA.

To A.pernix APE_1804 and S.solfataricus SSO2105.

This is an uncharacterized protein from Aeropyrum pernix (strain ATCC 700893 / DSM 11879 / JCM 9820 / NBRC 100138 / K1).